Reading from the N-terminus, the 301-residue chain is Acetylglutamate kinase (301 aa).

Residues 68-69, Arg90, and Asn195 each bind substrate; that span reads GG.

Belongs to the acetylglutamate kinase family. ArgB subfamily.

It is found in the cytoplasm. The catalysed reaction is N-acetyl-L-glutamate + ATP = N-acetyl-L-glutamyl 5-phosphate + ADP. Its pathway is amino-acid biosynthesis; L-arginine biosynthesis; N(2)-acetyl-L-ornithine from L-glutamate: step 2/4. Functionally, catalyzes the ATP-dependent phosphorylation of N-acetyl-L-glutamate. The chain is Acetylglutamate kinase from Pseudomonas putida (strain ATCC 700007 / DSM 6899 / JCM 31910 / BCRC 17059 / LMG 24140 / F1).